The chain runs to 567 residues: uncharacterized protein (567 aa).

The next 12 helical transmembrane spans lie at 136–156, 159–179, 193–213, 217–237, 258–278, 291–311, 334–354, 364–384, 393–415, 426–446, 457–477, and 536–553; these read LFCL…LIFA, FMGI…SDII, LLLG…SEVF, LCFL…FFFV, ILGG…LTFG, LLLL…SITE, FLIG…FQLV, LRLA…GILM, LLFS…HPGI, PANV…IFAF, TLYL…SAVI, and AQQF…LCIL.

Belongs to the major facilitator superfamily.

Its subcellular location is the membrane. This is an uncharacterized protein from Schizosaccharomyces pombe (strain 972 / ATCC 24843) (Fission yeast).